Here is a 301-residue protein sequence, read N- to C-terminus: Phosphatidylserine decarboxylase proenzyme (301 aa).

Active-site charge relay system; for autoendoproteolytic cleavage activity residues include Asp115, His171, and Ser258. Ser258 functions as the Schiff-base intermediate with substrate; via pyruvic acid; for decarboxylase activity in the catalytic mechanism. Pyruvic acid (Ser); by autocatalysis is present on Ser258.

It belongs to the phosphatidylserine decarboxylase family. PSD-B subfamily. Prokaryotic type II sub-subfamily. As to quaternary structure, heterodimer of a large membrane-associated beta subunit and a small pyruvoyl-containing alpha subunit. Pyruvate is required as a cofactor. Is synthesized initially as an inactive proenzyme. Formation of the active enzyme involves a self-maturation process in which the active site pyruvoyl group is generated from an internal serine residue via an autocatalytic post-translational modification. Two non-identical subunits are generated from the proenzyme in this reaction, and the pyruvate is formed at the N-terminus of the alpha chain, which is derived from the carboxyl end of the proenzyme. The autoendoproteolytic cleavage occurs by a canonical serine protease mechanism, in which the side chain hydroxyl group of the serine supplies its oxygen atom to form the C-terminus of the beta chain, while the remainder of the serine residue undergoes an oxidative deamination to produce ammonia and the pyruvoyl prosthetic group on the alpha chain. During this reaction, the Ser that is part of the protease active site of the proenzyme becomes the pyruvoyl prosthetic group, which constitutes an essential element of the active site of the mature decarboxylase.

Its subcellular location is the cell membrane. It carries out the reaction a 1,2-diacyl-sn-glycero-3-phospho-L-serine + H(+) = a 1,2-diacyl-sn-glycero-3-phosphoethanolamine + CO2. The protein operates within phospholipid metabolism; phosphatidylethanolamine biosynthesis; phosphatidylethanolamine from CDP-diacylglycerol: step 2/2. In terms of biological role, catalyzes the formation of phosphatidylethanolamine (PtdEtn) from phosphatidylserine (PtdSer). The polypeptide is Phosphatidylserine decarboxylase proenzyme (Chlamydia pneumoniae (Chlamydophila pneumoniae)).